The sequence spans 108 residues: MKKNTHPEYNKVLFVDSSTGYKFVCGSTYQSDKTEVYEGQEYPVCYVSVSSSSHPFFTGSKRLVDAEGRVDKFLKRYSNAKPAQPVQAPAEEGPVVKGKKKAPAKKKK.

The disordered stretch occupies residues 81-108 (KPAQPVQAPAEEGPVVKGKKKAPAKKKK). Residues 97–108 (KGKKKAPAKKKK) are compositionally biased toward basic residues.

It belongs to the bacterial ribosomal protein bL31 family. Type B subfamily. Part of the 50S ribosomal subunit.

The protein is Large ribosomal subunit protein bL31B of Chlamydia caviae (strain ATCC VR-813 / DSM 19441 / 03DC25 / GPIC) (Chlamydophila caviae).